We begin with the raw amino-acid sequence, 37 residues long: Large ribosomal subunit protein bL36c (37 aa).

Belongs to the bacterial ribosomal protein bL36 family.

Its subcellular location is the plastid. It is found in the chloroplast. In Staurastrum punctulatum (Green alga), this protein is Large ribosomal subunit protein bL36c.